A 182-amino-acid chain; its full sequence is Keratin, ultra high-sulfur matrix protein (182 aa).

This sequence belongs to the KRTAP type 5 family. As to expression, cuticle layers of differentiating wool follicles.

Its function is as follows. The keratin products of mammalian epidermal derivatives such as wool and hair consist of microfibrils embedded in a rigid matrix of other proteins. The matrix proteins include the high-sulfur and high-tyrosine keratins, having molecular weights of 6-20 kDa, whereas the microfibrils contain the larger, low-sulfur keratins (40-56 kDa). This chain is Keratin, ultra high-sulfur matrix protein, found in Ovis aries (Sheep).